A 377-amino-acid polypeptide reads, in one-letter code: N5-carboxyaminoimidazole ribonucleotide synthase (377 aa).

Residues R93, K133, 138–144 (GYDGRGQ), 175–178 (EEFV), E183, H206, and 257–258 (NE) contribute to the ATP site. The ATP-grasp domain occupies 97–287 (KTLLDHAGVR…QFENHLRAVC (191 aa)).

This sequence belongs to the PurK/PurT family. Homodimer.

It catalyses the reaction 5-amino-1-(5-phospho-beta-D-ribosyl)imidazole + hydrogencarbonate + ATP = 5-carboxyamino-1-(5-phospho-D-ribosyl)imidazole + ADP + phosphate + 2 H(+). It participates in purine metabolism; IMP biosynthesis via de novo pathway; 5-amino-1-(5-phospho-D-ribosyl)imidazole-4-carboxylate from 5-amino-1-(5-phospho-D-ribosyl)imidazole (N5-CAIR route): step 1/2. Its function is as follows. Catalyzes the ATP-dependent conversion of 5-aminoimidazole ribonucleotide (AIR) and HCO(3)(-) to N5-carboxyaminoimidazole ribonucleotide (N5-CAIR). The protein is N5-carboxyaminoimidazole ribonucleotide synthase of Vibrio vulnificus (strain YJ016).